We begin with the raw amino-acid sequence, 1101 residues long: Nuclear pore complex protein NUP107 (1101 aa).

Belongs to the nucleoporin Nup84/Nup107 family. As to quaternary structure, part of the nuclear pore complex (NPC). The NPC has an eight-fold symmetrical structure comprising a central transport channel and two rings, the cytoplasmic and nuclear rings, to which eight filaments are attached. The cytoplasmic filaments have loose ends, while the nuclear filaments are joined in a distal ring, forming a nuclear basket. NPCs are highly dynamic in configuration and composition, and can be devided in 3 subcomplexes, the NUP62 subcomplex, the NUP107-160 subcomplex and the NUP93 subcomplex, containing approximately 30 different nucleoporin proteins.

Its subcellular location is the nucleus envelope. It localises to the nucleus. The protein resides in the nuclear pore complex. This Arabidopsis thaliana (Mouse-ear cress) protein is Nuclear pore complex protein NUP107.